The following is a 457-amino-acid chain: Cysteine desulfurase (457 aa).

Positions 127, 128, 235, 255, and 257 each coordinate pyridoxal 5'-phosphate. Residue lysine 258 is modified to N6-(pyridoxal phosphate)lysine. Residue threonine 295 participates in pyridoxal 5'-phosphate binding. Cysteine 381 acts as the Cysteine persulfide intermediate in catalysis. Cysteine 381 serves as a coordination point for [2Fe-2S] cluster. Cysteine 381 is a binding site for Zn(2+). Position 381 is a cysteine persulfide (cysteine 381).

It belongs to the class-V pyridoxal-phosphate-dependent aminotransferase family. NifS/IscS subfamily. As to quaternary structure, homodimer. Component of the mitochondrial core iron-sulfur cluster (ISC) complex composed of NFS1, LYRM4, NDUFAB1, ISCU, FXN, and FDX2; this complex is a heterohexamer containing two copies of each monomer. Component of cyteine desulfurase complex composed of NFS1, LYRM4 and NDUFAB1; this complex contributes to the activation of cysteine desulfurase activity and NFS1 stabilization. Interacts (homodimer form) with ISCU (D-state); each monomer interacts with the C-terminal regions of each NFS1 monomer. Interacts with HSPA9. Interacts (via homodimer form) with FDX2. Interacts (via homodimer form) with FXN. Interacts with LYRM4. Component of a complex composed of FXN, NFS1, LYRM4 and ISCU. In terms of assembly, monomer. Homodimer. Oligomer. Interacts with ISCU. Component of the cysteine desulfurase complex composed of NFS1 and LYRM4; this complex contributes to the activation of cysteine desulfurase activity. Interacts with MOCS3. The cofactor is pyridoxal 5'-phosphate. N-gluconoylated. In terms of processing, cysteine persulfide intermediate is reduced by thiol-containing molecules like glutathione and L-cysteine. Persulfide reduction is a rate-limiting step of cysteine desulfurase catalytic cycle.

It is found in the mitochondrion. Its subcellular location is the cytoplasm. The protein resides in the nucleus. It localises to the cytoskeleton. The protein localises to the microtubule organizing center. It is found in the centrosome. It carries out the reaction (sulfur carrier)-H + L-cysteine = (sulfur carrier)-SH + L-alanine. The catalysed reaction is L-cysteinyl-[cysteine desulfurase] + L-cysteine = S-sulfanyl-L-cysteinyl-[cysteine desulfurase] + L-alanine. Its activity is regulated as follows. Active only in complex with LYRM4. In terms of biological role, cysteine desulfurase, of the core iron-sulfur cluster (ISC) assembly complex, that catalyzes the desulfuration of L-cysteine to L-alanine, as component of the cysteine desulfurase complex leading to the formation of a cysteine persulfide intermediate at the active site cysteine residue and participates in the [2Fe-2S] clusters assembly on the scaffolding protein ISCU. The persulfide is then transferred on the flexible Cys loop from the catalytic site of NFS1 to the surface of NFS1. After the NFS1-linked persulfide sulfur is transferred to one of the conserved Cys residues of the scaffold, a reaction assisted by FXN. The core iron-sulfur cluster (ISC) assembly complex is involved in the de novo synthesis of a [2Fe-2S] cluster, the first step of the mitochondrial iron-sulfur protein biogenesis. This process is initiated by the cysteine desulfurase complex (NFS1:LYRM4:NDUFAB1) that produces persulfide which is delivered on the scaffold protein ISCU in a FXN-dependent manner. Then this complex is stabilized by FDX2 which provides reducing equivalents to accomplish the [2Fe-2S] cluster assembly. Finally, the [2Fe-2S] cluster is transferred from ISCU to chaperone proteins, including HSCB, HSPA9 and GLRX5. Functionally, may catalyze the desulfuration of L-cysteine to L-alanine as component of the cysteine desulfurase complex (NFS1:LYRM4), leading to the formation of a cysteine persulfide intermediate. Acts as a sulfur donor for MOCS3 by transferring the sulfur of the cysteine persulfide intermediate on MOCS3. The polypeptide is Cysteine desulfurase (Pongo abelii (Sumatran orangutan)).